Reading from the N-terminus, the 547-residue chain is Inositol-tetrakisphosphate 1-kinase 6 (547 aa).

Position 263 (Lys263) interacts with 1D-myo-inositol 1,3,4-trisphosphate. Residues Arg317 and Lys370 each coordinate ATP. The region spanning 327–539 (LEGLSAEGRP…FWDAIKQSYE (213 aa)) is the ATP-grasp domain. Residues His381 and Lys415 each contribute to the 1D-myo-inositol 1,3,4-trisphosphate site. Residues 404–415 (QEYIDHGSKIFK), Ser430, and Ser450 each bind ATP. Mg(2+) is bound by residues Asp497, Asp511, and Asn513. Asn513 and Ser517 together coordinate 1D-myo-inositol 1,3,4-trisphosphate.

Belongs to the ITPK1 family. In terms of assembly, monomer. Mg(2+) serves as cofactor. Highly expressed in embryos and at lower levels in roots, leaves, flowers and anthers.

It catalyses the reaction 1D-myo-inositol 3,4,5,6-tetrakisphosphate + ATP = 1D-myo-inositol 1,3,4,5,6-pentakisphosphate + ADP + H(+). The enzyme catalyses 1D-myo-inositol 1,3,4-trisphosphate + ATP = 1D-myo-inositol 1,3,4,5-tetrakisphosphate + ADP + H(+). The catalysed reaction is 1D-myo-inositol 1,3,4-trisphosphate + ATP = 1D-myo-inositol 1,3,4,6-tetrakisphosphate + ADP + H(+). Functionally, kinase that can phosphorylate various inositol polyphosphate such as Ins(3,4,5,6)P4 or Ins(1,3,4)P3 and participates in phytic acid biosynthesis in developing seeds. Phytic acid is the primary storage form of phosphorus in cereal grains and other plant seeds. The protein is Inositol-tetrakisphosphate 1-kinase 6 (ITPK6) of Oryza sativa subsp. japonica (Rice).